Reading from the N-terminus, the 246-residue chain is Uridylate kinase (246 aa).

Position 20–23 (20–23 (KISG)) interacts with ATP. The tract at residues 28–33 (GDQGYG) is involved in allosteric activation by GTP. G62 contacts UMP. ATP is bound by residues G63 and R67. UMP contacts are provided by residues D82 and 143-150 (TGNPYFTT). Residues T170, Y176, and D179 each coordinate ATP.

It belongs to the UMP kinase family. As to quaternary structure, homohexamer.

It is found in the cytoplasm. The catalysed reaction is UMP + ATP = UDP + ADP. Its pathway is pyrimidine metabolism; CTP biosynthesis via de novo pathway; UDP from UMP (UMPK route): step 1/1. Its activity is regulated as follows. Allosterically activated by GTP. Inhibited by UTP. Its function is as follows. Catalyzes the reversible phosphorylation of UMP to UDP. The chain is Uridylate kinase from Cereibacter sphaeroides (strain ATCC 17029 / ATH 2.4.9) (Rhodobacter sphaeroides).